The following is a 295-amino-acid chain: Bifunctional protein FolD (295 aa).

NADP(+) contacts are provided by residues 166–168 (GRS), S195, and I236.

It belongs to the tetrahydrofolate dehydrogenase/cyclohydrolase family. As to quaternary structure, homodimer.

The catalysed reaction is (6R)-5,10-methylene-5,6,7,8-tetrahydrofolate + NADP(+) = (6R)-5,10-methenyltetrahydrofolate + NADPH. It carries out the reaction (6R)-5,10-methenyltetrahydrofolate + H2O = (6R)-10-formyltetrahydrofolate + H(+). It participates in one-carbon metabolism; tetrahydrofolate interconversion. In terms of biological role, catalyzes the oxidation of 5,10-methylenetetrahydrofolate to 5,10-methenyltetrahydrofolate and then the hydrolysis of 5,10-methenyltetrahydrofolate to 10-formyltetrahydrofolate. The polypeptide is Bifunctional protein FolD (Pelodictyon phaeoclathratiforme (strain DSM 5477 / BU-1)).